A 298-amino-acid polypeptide reads, in one-letter code: Max-like protein X (298 aa).

The tract at residues 1-63 (MTEPGASPED…ARGCREDSSH (63 aa)) is disordered. Phosphoserine is present on Ser-7. Positions 28–37 (GRARARRGSG) are enriched in basic residues. Phosphoserine is present on residues Ser-45, Ser-48, Ser-74, Ser-77, and Ser-98. Residues 98–109 (SIGSTSASSVPN) show a composition bias toward polar residues. Residues 98–119 (SIGSTSASSVPNTDDEDSDYQQ) form a disordered region. Residues 129–187 (RRRRAHTQAEQKRRDAIKRGYDDLQTIVPTCQQQDFSIGSQKLSKAIVLQKTIDYIQFL) enclose the bHLH domain. Residues 194 to 214 (QEEEVSTLRKDVTALKIMKVN) are leucine-zipper.

As to quaternary structure, efficient DNA binding requires dimerization with another bHLH protein. Binds DNA as a heterodimer with MAD1, MAD4, MNT, WBSCR14 and MLXIP. Can also bind DNA as a homodimer. Expressed in all tissues examined: stomach, duodenum, jejunum, ileum, colon, liver, pancreas, salivary gland, kidney, spleen, lung, heart, skeletal muscle, brain, ovary and testis.

The protein localises to the cytoplasm. It localises to the nucleus. Transcription regulator. Forms a sequence-specific DNA-binding protein complex with MAD1, MAD4, MNT, WBSCR14 and MLXIP which recognizes the core sequence 5'-CACGTG-3'. The TCFL4-MAD1, TCFL4-MAD4, TCFL4-WBSCR14 complexes are transcriptional repressors. Plays a role in transcriptional activation of glycolytic target genes. Involved in glucose-responsive gene regulation. The protein is Max-like protein X (Mlx) of Mus musculus (Mouse).